Here is a 197-residue protein sequence, read N- to C-terminus: GTP cyclohydrolase-2 (197 aa).

50 to 54 contributes to the GTP binding site; the sequence is RIHSE. Zn(2+) contacts are provided by Cys-55, Cys-66, and Cys-68. Residues Gln-71, 93–95, and Thr-115 contribute to the GTP site; that span reads EGR. The active-site Proton acceptor is Asp-127. The Nucleophile role is filled by Arg-129. GTP contacts are provided by Thr-150 and Lys-155.

It belongs to the GTP cyclohydrolase II family. Zn(2+) serves as cofactor.

It carries out the reaction GTP + 4 H2O = 2,5-diamino-6-hydroxy-4-(5-phosphoribosylamino)-pyrimidine + formate + 2 phosphate + 3 H(+). It participates in cofactor biosynthesis; riboflavin biosynthesis; 5-amino-6-(D-ribitylamino)uracil from GTP: step 1/4. Functionally, catalyzes the conversion of GTP to 2,5-diamino-6-ribosylamino-4(3H)-pyrimidinone 5'-phosphate (DARP), formate and pyrophosphate. This Neisseria meningitidis serogroup C (strain 053442) protein is GTP cyclohydrolase-2.